Consider the following 164-residue polypeptide: Ubiquitin-fold modifier-conjugating enzyme 1 (164 aa).

Cys-116 serves as the catalytic Glycyl thioester intermediate.

The protein belongs to the ubiquitin-conjugating enzyme family. UFC1 subfamily.

In terms of biological role, E2-like enzyme which forms an intermediate with UFM1 via a thioester linkage. The sequence is that of Ubiquitin-fold modifier-conjugating enzyme 1 from Drosophila willistoni (Fruit fly).